A 779-amino-acid polypeptide reads, in one-letter code: uncharacterized protein (779 aa).

C72 and C75 together coordinate [4Fe-4S] cluster.

It belongs to the prokaryotic molybdopterin-containing oxidoreductase family. Requires [4Fe-4S] cluster as cofactor. It depends on Mo-bis(molybdopterin guanine dinucleotide) as a cofactor.

This is an uncharacterized protein from Mycobacterium bovis (strain ATCC BAA-935 / AF2122/97).